Reading from the N-terminus, the 666-residue chain is MDLHQSPTARLLQKWCSHESPFGCRRHYNSRKKLKLIRVIGLVMGLVAVSTVPFSISAFTETDSQSNRGEASDMSGPRVAQGHRQRTLLDLNDKIRDYTPQPPASQEDQAENSTEHTQGDYPKDIFSLEERRKGAIILHVIGMIYMFIALAIVCDEFFVPSLTVITEKLGISDDVAGATFMAAGGSAPELFTSLIGVFIAHSNVGIGTIVGSAVFNILFVIGMCALFSREILNLTWWPLFRDVSFYIVDLLMLITFFLDNVIMWWESLLLLTAYFAYVVFMKFNVQVERWVKQMISRNNVIKVTVPEAQAKSPTAGDKDGPTLPSKPRLQRGGSSASLHNSLMRNSIFQLMIHTLDPLAEELGSYGKLKYYDTMTEEGRFREKASILHKIAKKKCQVDENERQNGAANHVEKIELPNSTSTEVEMTPSSEASEPVQNGNLSHNIEAADAPKATETAEEEDDQPLSLSWPTNTRKQATFLIVFPIVFPLWITLPDVRKPASRKFFPITFFGSITWIAVFSYLMVWWAHQVGETIGISEEIMGLTILAAGTSIPDLITSVIVARKGLGDMAVSSSVGSNIFDITVGLPLPWLLYTIIHRFSPVTVSSNGLFCAIVLLFIMLLFVILSIALCKWRMNKILGFIMFGLYFVFLVVSVLLEDKVLVCPVSI.

Over 1-38 the chain is Cytoplasmic; the sequence is MDLHQSPTARLLQKWCSHESPFGCRRHYNSRKKLKLIR. A helical transmembrane segment spans residues 39–59; the sequence is VIGLVMGLVAVSTVPFSISAF. The Extracellular segment spans residues 60-133; it reads TETDSQSNRG…DIFSLEERRK (74 aa). Residues 63–122 form a disordered region; it reads DSQSNRGEASDMSGPRVAQGHRQRTLLDLNDKIRDYTPQPPASQEDQAENSTEHTQGDYP. N-linked (GlcNAc...) asparagine glycosylation occurs at Asn-112. The segment covering 113–122 has biased composition (basic and acidic residues); it reads STEHTQGDYP. A helical membrane pass occupies residues 134–154; it reads GAIILHVIGMIYMFIALAIVC. Residues 155–179 lie on the Cytoplasmic side of the membrane; sequence DEFFVPSLTVITEKLGISDDVAGAT. The stretch at 175 to 215 is one Alpha-1 repeat; it reads VAGATFMAAGGSAPELFTSLIGVFIAHSNVGIGTIVGSAVF. A helical transmembrane segment spans residues 180–200; the sequence is FMAAGGSAPELFTSLIGVFIA. The Extracellular segment spans residues 201 to 205; sequence HSNVG. A helical membrane pass occupies residues 206 to 226; that stretch reads IGTIVGSAVFNILFVIGMCAL. Topologically, residues 227–237 are cytoplasmic; that stretch reads FSREILNLTWW. The chain crosses the membrane as a helical span at residues 238 to 258; the sequence is PLFRDVSFYIVDLLMLITFFL. Topologically, residues 259-260 are extracellular; sequence DN. Residues 261–281 form a helical membrane-spanning segment; that stretch reads VIMWWESLLLLTAYFAYVVFM. The Cytoplasmic portion of the chain corresponds to 282 to 502; that stretch reads KFNVQVERWV…PDVRKPASRK (221 aa). Residues 311-336 are disordered; it reads KSPTAGDKDGPTLPSKPRLQRGGSSA. Ser-337 and Ser-341 each carry phosphoserine. The segment at 397–467 is disordered; the sequence is VDENERQNGA…EEDDQPLSLS (71 aa). The span at 416–442 shows a compositional bias: polar residues; it reads PNSTSTEVEMTPSSEASEPVQNGNLSH. A helical membrane pass occupies residues 503–523; sequence FFPITFFGSITWIAVFSYLMV. Over 524–538 the chain is Extracellular; it reads WWAHQVGETIGISEE. The helical transmembrane segment at 539-559 threads the bilayer; that stretch reads IMGLTILAAGTSIPDLITSVI. The stretch at 546–577 is one Alpha-2 repeat; sequence AAGTSIPDLITSVIVARKGLGDMAVSSSVGSN. The Cytoplasmic segment spans residues 560–574; sequence VARKGLGDMAVSSSV. A helical transmembrane segment spans residues 575–595; it reads GSNIFDITVGLPLPWLLYTII. Topologically, residues 596-607 are extracellular; that stretch reads HRFSPVTVSSNG. A helical transmembrane segment spans residues 608 to 628; it reads LFCAIVLLFIMLLFVILSIAL. Topologically, residues 629-635 are cytoplasmic; it reads CKWRMNK. Residues 636 to 656 form a helical membrane-spanning segment; that stretch reads ILGFIMFGLYFVFLVVSVLLE. The Extracellular segment spans residues 657 to 666; sequence DKVLVCPVSI.

This sequence belongs to the Ca(2+):cation antiporter (CaCA) (TC 2.A.19) family. SLC24A subfamily.

Its subcellular location is the cell membrane. It carries out the reaction Ca(2+)(out) + K(+)(out) + 4 Na(+)(in) = Ca(2+)(in) + K(+)(in) + 4 Na(+)(out). Functionally, calcium, potassium:sodium antiporter that transports 1 Ca(2+) and 1 K(+) in exchange for 4 Na(+). Required for learming and memory by regulating neuronal Ca(2+), which is essential for the development of synaptic plasticity. In Mus musculus (Mouse), this protein is Sodium/potassium/calcium exchanger 2.